The primary structure comprises 809 residues: ATP-dependent zinc metalloprotease FTSH 3, mitochondrial (809 aa).

A mitochondrion-targeting transit peptide spans 1–83; sequence MTMIFFSKLN…FANPRLRRFF (83 aa). The span at 93–121 shows a compositional bias: basic and acidic residues; sequence YENYFPKDKQEPKSDQKSEHKEGSEKNEN. Residues 93–122 are disordered; the sequence is YENYFPKDKQEPKSDQKSEHKEGSEKNENE. The chain crosses the membrane as a helical span at residues 132–152; that stretch reads FQNLLIPLLALAVFFSTFSFG. 362–369 provides a ligand contact to ATP; the sequence is GPPGTGKT. Residue H586 coordinates Zn(2+). E587 is a catalytic residue. Residues H590 and D662 each coordinate Zn(2+). Positions 776–809 are disordered; that stretch reads GFEETEKDSAATPTVEPVVDDGAPPPFEPQVVPT.

This sequence in the N-terminal section; belongs to the AAA ATPase family. In the C-terminal section; belongs to the peptidase M41 family. Requires Zn(2+) as cofactor.

The protein resides in the mitochondrion inner membrane. Probable ATP-dependent zinc metallopeptidase. Involved in the assembly and/or stability of the complexes I and V of the mitochondrial oxidative phosphorylation system. The chain is ATP-dependent zinc metalloprotease FTSH 3, mitochondrial (FTSH3) from Arabidopsis thaliana (Mouse-ear cress).